The sequence spans 199 residues: Probable GTP-binding protein EngB (199 aa).

One can recognise an EngB-type G domain in the interval 28 to 199 (DIPEIALAGR…QAWDAILEQI (172 aa)). GTP is bound by residues 36 to 43 (GRSNVGKS), 63 to 67 (GKTQL), 81 to 84 (DVPG), 148 to 151 (TKAD), and 180 to 182 (FSS). Residues serine 43 and threonine 65 each coordinate Mg(2+).

The protein belongs to the TRAFAC class TrmE-Era-EngA-EngB-Septin-like GTPase superfamily. EngB GTPase family. The cofactor is Mg(2+).

In terms of biological role, necessary for normal cell division and for the maintenance of normal septation. The protein is Probable GTP-binding protein EngB of Streptococcus uberis (strain ATCC BAA-854 / 0140J).